The chain runs to 159 residues: Ecotin (159 aa).

Positions 1 to 22 are cleaved as a signal peptide; the sequence is MRPTPMTAILALSLAAAAPAMA. Cys-68 and Cys-105 form a disulfide bridge.

Belongs to the protease inhibitor I11 (ecotin) family. Homodimer.

It is found in the periplasm. Its function is as follows. General inhibitor of family S1 serine proteases. The polypeptide is Ecotin (Pseudomonas putida (strain ATCC 700007 / DSM 6899 / JCM 31910 / BCRC 17059 / LMG 24140 / F1)).